The sequence spans 573 residues: Splicing factor U2af large subunit A (573 aa).

Positions 1–175 (MSEFEDHEGN…KSKQRVSGFD (175 aa)) are disordered. Positions 22-93 (NGGRDGEIED…ERSRDKDRDH (72 aa)) are enriched in basic and acidic residues. Residues 94-105 (RERHHRSSRHRD) are compositionally biased toward basic residues. The segment covering 106-141 (HSRERGERRERGGRDDDDYRRSRDRDHDRRRDDRGG) has biased composition (basic and acidic residues). A compositionally biased stretch (basic residues) spans 159–169 (TRSRSPSKSKQ). RRM domains follow at residues 239 to 322 (RRVY…RPSD), 359 to 437 (DRIF…RANQ), and 478 to 564 (QVVT…YPED).

This sequence belongs to the splicing factor SR family. In terms of assembly, component of the spliceosome. Interacts with SUA. Interacts with SF1 in the nucleus.

The protein localises to the nucleus. Necessary for the splicing of pre-mRNA. In Arabidopsis thaliana (Mouse-ear cress), this protein is Splicing factor U2af large subunit A.